Here is a 149-residue protein sequence, read N- to C-terminus: Ribonuclease pancreatic (149 aa).

The N-terminal stretch at 1–25 is a signal peptide; it reads MGLEKSLILLPLLVLVLAWVQPSLG. The substrate site is built by Lys-32 and Arg-35. His-37 functions as the Proton acceptor in the catalytic mechanism. 4 cysteine pairs are disulfide-bonded: Cys-51–Cys-109, Cys-65–Cys-120, Cys-83–Cys-135, and Cys-90–Cys-97. 66–70 lines the substrate pocket; sequence KRVNT. Asn-87 carries an N-linked (GlcNAc...) asparagine glycan. Substrate is bound by residues Lys-91 and Arg-110. The active-site Proton donor is His-144.

This sequence belongs to the pancreatic ribonuclease family. In terms of assembly, monomer. Interacts with and forms tight 1:1 complexes with RNH1. Dimerization of two such complexes may occur. Interaction with RNH1 inhibits this protein. As to expression, pancreas.

The protein localises to the secreted. It catalyses the reaction an [RNA] containing cytidine + H2O = an [RNA]-3'-cytidine-3'-phosphate + a 5'-hydroxy-ribonucleotide-3'-[RNA].. It carries out the reaction an [RNA] containing uridine + H2O = an [RNA]-3'-uridine-3'-phosphate + a 5'-hydroxy-ribonucleotide-3'-[RNA].. In terms of biological role, endonuclease that catalyzes the cleavage of RNA on the 3' side of pyrimidine nucleotides. Acts on single-stranded and double-stranded RNA. The chain is Ribonuclease pancreatic (RNASE1) from Acomys cahirinus (Cairo spiny mouse).